The sequence spans 141 residues: Putative pre-16S rRNA nuclease (141 aa).

Belongs to the YqgF nuclease family.

The protein resides in the cytoplasm. In terms of biological role, could be a nuclease involved in processing of the 5'-end of pre-16S rRNA. The sequence is that of Putative pre-16S rRNA nuclease from Natranaerobius thermophilus (strain ATCC BAA-1301 / DSM 18059 / JW/NM-WN-LF).